The primary structure comprises 357 residues: Golgi to ER traffic protein 2 (357 aa).

At 1-224 (MSETTDKQLT…AKYHTYQEQL (224 aa)) the chain is on the cytoplasmic side. Residues 65 to 81 (TDTATVTDSSTNATSVS) show a composition bias toward low complexity. Positions 65-99 (TDTATVTDSSTNATSVSPSAAKATPTSTGVSSAIS) are disordered. Positions 88–98 (TPTSTGVSSAI) are enriched in polar residues. A helical membrane pass occupies residues 225-245 (WQFRFLVVRILATIFNFAYHF). The Lumenal portion of the chain corresponds to 246 to 270 (ITIPSFTASNHAYVRDLSEVYPLLG). Residues 271-290 (FMTIFTSIEVVIIATYYLLF) traverse the membrane as a helical segment. The Cytoplasmic segment spans residues 291-334 (TKLGLFHASNQKSFILKGISTLSMFVPQLLRYEPLVATFLGYKE). The helical transmembrane segment at 335-355 (LLGIFVGDLSLVVVMFGLLSF) threads the bilayer. Residues 356-357 (SN) lie on the Lumenal side of the membrane.

This sequence belongs to the GET2 family. In terms of assembly, component of the Golgi to ER traffic (GET) complex, which is composed of GET1, GET2 and GET3. Within the complex, GET1 and GET2 form a heterotetramer which is stabilized by phosphatidylinositol binding and which binds to the GET3 homodimer.

Its subcellular location is the endoplasmic reticulum membrane. The protein localises to the golgi apparatus membrane. In terms of biological role, required for the post-translational delivery of tail-anchored (TA) proteins to the endoplasmic reticulum. Together with GET1, acts as a membrane receptor for soluble GET3, which recognizes and selectively binds the transmembrane domain of TA proteins in the cytosol. The GET complex cooperates with the HDEL receptor ERD2 to mediate the ATP-dependent retrieval of resident ER proteins that contain a C-terminal H-D-E-L retention signal from the Golgi to the ER. This is Golgi to ER traffic protein 2 from Lodderomyces elongisporus (strain ATCC 11503 / CBS 2605 / JCM 1781 / NBRC 1676 / NRRL YB-4239) (Yeast).